Consider the following 455-residue polypeptide: Ribulose bisphosphate carboxylase large chain (455 aa).

Position 5 is an N6,N6,N6-trimethyllysine (Lys5). 2 residues coordinate substrate: Asn114 and Thr164. Lys166 (proton acceptor) is an active-site residue. Lys168 contributes to the substrate binding site. Lys192, Asp194, and Glu195 together coordinate Mg(2+). An N6-carboxylysine modification is found at Lys192. Catalysis depends on His285, which acts as the Proton acceptor. Positions 286, 318, and 370 each coordinate substrate.

It belongs to the RuBisCO large chain family. Type I subfamily. In terms of assembly, heterohexadecamer of 8 large chains and 8 small chains; disulfide-linked. The disulfide link is formed within the large subunit homodimers. The cofactor is Mg(2+). The disulfide bond which can form in the large chain dimeric partners within the hexadecamer appears to be associated with oxidative stress and protein turnover.

The protein resides in the plastid. The protein localises to the chloroplast. The enzyme catalyses 2 (2R)-3-phosphoglycerate + 2 H(+) = D-ribulose 1,5-bisphosphate + CO2 + H2O. The catalysed reaction is D-ribulose 1,5-bisphosphate + O2 = 2-phosphoglycolate + (2R)-3-phosphoglycerate + 2 H(+). In terms of biological role, ruBisCO catalyzes two reactions: the carboxylation of D-ribulose 1,5-bisphosphate, the primary event in carbon dioxide fixation, as well as the oxidative fragmentation of the pentose substrate in the photorespiration process. Both reactions occur simultaneously and in competition at the same active site. This chain is Ribulose bisphosphate carboxylase large chain, found in Lupinus arcticus (Arctic lupine).